A 555-amino-acid chain; its full sequence is Branched-chain-amino-acid aminotransferase-like protein 1 (555 aa).

It belongs to the class-IV pyridoxal-phosphate-dependent aminotransferase family.

This Arabidopsis thaliana (Mouse-ear cress) protein is Branched-chain-amino-acid aminotransferase-like protein 1.